The chain runs to 459 residues: Zinc finger protein ZPR1 (459 aa).

A compositionally biased stretch (low complexity) spans 1–29 (MSAGGAVEPGLPAAAAAPSAAPARDPGPG). The interval 1 to 43 (MSAGGAVEPGLPAAAAAPSAAPARDPGPGHLFRPISAEDEEQQ) is disordered. 2 C4-type zinc fingers span residues 51–83 (CMNC…CEHC) and 259–291 (CPEC…CENC). The segment at 438-459 (NEELGLNDMKTEGYETGLPAQR) is disordered.

The protein belongs to the ZPR1 family. Component of an import snRNP complex composed of KPNB1, SNUPN, SMN1 and ZNF259. Interacts (via C-terminal region) with SMN1 (via C-terminal region); the interaction occurs after treatment with serum. Interacts with elongation factor 1-alpha EEF1A1; the interaction occurs in a epidermal growth factor (EGF)-dependent manner. Interacts (via zinc fingers) with EGFR (via C-terminal cytoplasmic kinase domain); the interaction is negatively regulated in response to epidermal growth factor (EGF) stimulation and EGFR kinase activity. May also bind to the PDGFR receptor.

Its subcellular location is the nucleus. It localises to the cytoplasm. It is found in the nucleolus. The protein resides in the perinuclear region. The protein localises to the gem. Its subcellular location is the cajal body. It localises to the cell projection. It is found in the axon. The protein resides in the growth cone. Functionally, acts as a signaling molecule that communicates proliferative growth signals from the cytoplasm to the nucleus. Plays a role for the localization and accumulation of the survival motor neuron protein SMN1 in sub-nuclear bodies, including gems and Cajal bodies. Induces neuron differentiation and stimulates axonal growth and formation of growth cone in spinal cord motor neurons. Plays a role in the splicing of cellular pre-mRNAs. May be involved in H(2)O(2)-induced neuronal cell death. This Bos taurus (Bovine) protein is Zinc finger protein ZPR1 (ZNF259).